The sequence spans 1297 residues: Protein ENHANCED DOWNY MILDEW 2 (1297 aa).

Residues glutamate 222–lysine 281 form a PHD-type 1; degenerate zinc finger. Residues cysteine 237, cysteine 241, cysteine 275, cysteine 278, cysteine 285, cysteine 288, cysteine 306, cysteine 311, histidine 316, cysteine 319, cysteine 346, and histidine 349 each coordinate Zn(2+). The PHD-type 2; atypical zinc-finger motif lies at isoleucine 282–serine 352. The PHD-type 3; degenerate zinc-finger motif lies at cysteine 351–glutamate 417. Residues glutamine 445 to histidine 452 carry the Nuclear localization signal 1 motif. Disordered stretches follow at residues cysteine 471 to alanine 547 and threonine 562 to leucine 598. A compositionally biased stretch (low complexity) spans serine 475–lysine 487. Residues threonine 492 to serine 499 carry the Nuclear localization signal 2 motif. A compositionally biased stretch (basic and acidic residues) spans lysine 526–alanine 547. 2 short sequence motifs (nuclear localization signal) span residues methionine 610–isoleucine 617 and leucine 979–lysine 986. 2 stretches are compositionally biased toward basic and acidic residues: residues glutamine 969–glycine 990 and glutamate 1096–arginine 1109. Disordered regions lie at residues glutamine 969–serine 1017, histidine 1085–arginine 1109, and phenylalanine 1260–aspartate 1297.

In terms of assembly, interacts with WNK8 in nucleus; this interaction is involved in developmental processes regulation but not in RPP7-dependent disease resistance. Interacts with EML1 and EML2 in nucleus. Component of the ASI1-AIPP1-EDM2 (AAE) RNA regulatory complex composed of at least AIPP1/EDM3, ASI1 and EDM2 and may contain CPL2, AIPP2 and AIPP3/BDT1. Binds directly to AIPP1/EDM3. Co-associates with AIPP1/EDM3 to histone H3 lysine 9 dimethylation (H3K9me2)-marked chromatin and transcripts at a critical proximal polyadenylation site of RPP7 to hamper proximal transcript polyadeylation/termination. Phosphorylated by WNK8.

The protein resides in the nucleus. In terms of biological role, cellular antisilencing factor and regulator of genome DNA methylation patterns involved in the regulation of chromatin states. Together with SUVH4, monitors repressive epigenetic marks H3K27me1, H3K9me2, and prevents DNA-methylation at CHG sites, affecting especially the expression of transposons and developmentally important genes. Collaboratively with ASI1 and AIPP1/EDM3, the AAE complex regulates alternative RNA processing (e.g. alternative splicing) and epigenetic silencing (e.g. H3K9me2) of intronic heterochromatin-containing genes as well as genic heterochromatin-containing genes by promoting distal 3' polyadenylation. Epigenetic reader that binds DNA and contributes to transcriptional transposable element (TE) silencing by modulating levels of the repressive post-translational histone modifications (PHM) H3K9me2. In cv. Columbia, required for RPP7-dependent disease resistance against the Hyaloperonospora arabidopsidis isolate Hiks1, by promoting levels of RPP7 via alternative polyadenylation (APA), resulting from cooption of epigenetic information at the TE insertion locus COPIA-R7. Exhibits a global role in NLR (nucleotide-binding, leucine-rich repeat) defense genes epigenetic (e.g. H3K9me2 hallmarks) expression control; promotes the accumulation of RPP7, RPP4 and some other proteins, but mediates the repression of several other NLR products, probably to compensate for fitness penalties caused by defense mechanisms. Regulates development processes such as the formation of leaf pavement cells, leaf expansion, fertility and flowering. Prevents FLC accumulation to control flowering. Modulates stomatal development by regulating the methylation-mediated silencing of ERECTA receptor genes (e.g. ER, ERL1 and ERL2) and preventing cell divisions. The protein is Protein ENHANCED DOWNY MILDEW 2 of Arabidopsis thaliana (Mouse-ear cress).